The sequence spans 393 residues: Phosphoglycerate kinase (393 aa).

Substrate is bound by residues 22–24, Arg37, 60–63, Arg119, and Arg152; these read DFN and HLGR. ATP is bound by residues Lys202, Gly293, Glu324, and 350–353; that span reads GGDS.

Belongs to the phosphoglycerate kinase family. As to quaternary structure, monomer.

It localises to the cytoplasm. It catalyses the reaction (2R)-3-phosphoglycerate + ATP = (2R)-3-phospho-glyceroyl phosphate + ADP. It participates in carbohydrate degradation; glycolysis; pyruvate from D-glyceraldehyde 3-phosphate: step 2/5. The polypeptide is Phosphoglycerate kinase (Borreliella burgdorferi (strain ZS7) (Borrelia burgdorferi)).